The primary structure comprises 26 residues: Orexigenic neuropeptide 26RFa (26 aa).

F26 carries the post-translational modification Phenylalanine amide.

As to expression, brain.

It is found in the secreted. Functionally, may have orexigenic activity. May promote aldosterone secretion by the adrenal gland. In Pelophylax lessonae (Pool frog), this protein is Orexigenic neuropeptide 26RFa.